Reading from the N-terminus, the 433-residue chain is Glutamate-1-semialdehyde 2,1-aminomutase (433 aa).

At lysine 273 the chain carries N6-(pyridoxal phosphate)lysine.

The protein belongs to the class-III pyridoxal-phosphate-dependent aminotransferase family. HemL subfamily. Homodimer. It depends on pyridoxal 5'-phosphate as a cofactor.

It is found in the cytoplasm. It carries out the reaction (S)-4-amino-5-oxopentanoate = 5-aminolevulinate. It functions in the pathway porphyrin-containing compound metabolism; protoporphyrin-IX biosynthesis; 5-aminolevulinate from L-glutamyl-tRNA(Glu): step 2/2. In Polynucleobacter necessarius subsp. necessarius (strain STIR1), this protein is Glutamate-1-semialdehyde 2,1-aminomutase.